A 278-amino-acid polypeptide reads, in one-letter code: Large ribosomal subunit protein uL2 (278 aa).

A compositionally biased stretch (basic residues) spans 212 to 221 (NRWLGKRPHN). The interval 212-278 (NRWLGKRPHN…ILSSRHNRKK (67 aa)) is disordered.

This sequence belongs to the universal ribosomal protein uL2 family. As to quaternary structure, part of the 50S ribosomal subunit. Forms a bridge to the 30S subunit in the 70S ribosome.

Its function is as follows. One of the primary rRNA binding proteins. Required for association of the 30S and 50S subunits to form the 70S ribosome, for tRNA binding and peptide bond formation. It has been suggested to have peptidyltransferase activity; this is somewhat controversial. Makes several contacts with the 16S rRNA in the 70S ribosome. This is Large ribosomal subunit protein uL2 from Methylorubrum populi (strain ATCC BAA-705 / NCIMB 13946 / BJ001) (Methylobacterium populi).